The following is a 244-amino-acid chain: rRNA adenine N-6-methyltransferase (244 aa).

S-adenosyl-L-methionine is bound by residues asparagine 11, isoleucine 13, glycine 38, glutamate 59, aspartate 84, and asparagine 101.

Belongs to the class I-like SAM-binding methyltransferase superfamily. rRNA adenine N(6)-methyltransferase family.

It catalyses the reaction adenosine(2085) in 23S rRNA + 2 S-adenosyl-L-methionine = N(6)-dimethyladenosine(2085) in 23S rRNA + 2 S-adenosyl-L-homocysteine + 2 H(+). Functionally, this protein produces a dimethylation of the adenine residue at position 2085 in 23S rRNA, resulting in reduced affinity between ribosomes and macrolide-lincosamide-streptogramin B antibiotics. The sequence is that of rRNA adenine N-6-methyltransferase (ermC') from Bacillus subtilis.